A 120-amino-acid chain; its full sequence is Large ribosomal subunit protein eL34x (120 aa).

The segment at threonine 31 to arginine 50 is disordered.

It belongs to the eukaryotic ribosomal protein eL34 family.

The protein is Large ribosomal subunit protein eL34x (RPL34C) of Arabidopsis thaliana (Mouse-ear cress).